A 417-amino-acid polypeptide reads, in one-letter code: MAEIRNYTMNFGPQHPAAHGVLRLVLELDGEVIQRADPHIGLLHRATEKLAEYKTYIQSVPYMDRLDYVSMMANEHAYVMAIEKLLQLEVPIRAQYIRVMFDEITRILNHLLWLGAHALDVGAMTVFLYAFRDREDLMDAYESVSGARMHAAYYRPGGVYRDLPDSMPQYKASKIHDEKTTKARNENRQGSLLDFIEDFTNRFPTYVDEYETLLTDNRIWKQRLVGIGTVSPERAMALGFTGPMLRGSGVEWDLRKKQPYEVYDQLDFDIPVGVNGDCYDRYLVRIEEFRQSNRIIRQCVDWLRKNPGPVITDNHKVAPPSRVNMKQNMEELIHHFKLFTEGFHVPPGETYAAVEHPKGEFGIYLISDGANMPYRMKIRAPGFAHLAALDEMSRGHMIADVVAIIGTQDIVFGEIDR.

The protein belongs to the complex I 49 kDa subunit family. In terms of assembly, NDH-1 is composed of 14 different subunits. Subunits NuoB, C, D, E, F, and G constitute the peripheral sector of the complex.

It is found in the cell inner membrane. It catalyses the reaction a quinone + NADH + 5 H(+)(in) = a quinol + NAD(+) + 4 H(+)(out). In terms of biological role, NDH-1 shuttles electrons from NADH, via FMN and iron-sulfur (Fe-S) centers, to quinones in the respiratory chain. The immediate electron acceptor for the enzyme in this species is believed to be ubiquinone. Couples the redox reaction to proton translocation (for every two electrons transferred, four hydrogen ions are translocated across the cytoplasmic membrane), and thus conserves the redox energy in a proton gradient. The sequence is that of NADH-quinone oxidoreductase subunit D from Nitrosospira multiformis (strain ATCC 25196 / NCIMB 11849 / C 71).